We begin with the raw amino-acid sequence, 620 residues long: FAD-linked oxidoreductase notD (620 aa).

Residues 1–21 form the signal peptide; it reads MHYIRELLIVVFTSCPALSYA. Asparagine 50, asparagine 86, and asparagine 109 each carry an N-linked (GlcNAc...) asparagine glycan. An FAD-binding PCMH-type domain is found at 124-313; that stretch reads SQGRIPRYSA…TSVTMPVFGA (190 aa). An N-linked (GlcNAc...) asparagine glycan is attached at asparagine 403.

It belongs to the oxygen-dependent FAD-linked oxidoreductase family. FAD is required as a cofactor.

It functions in the pathway alkaloid biosynthesis. Functionally, FAD-linked oxidoreductase; part of the gene cluster that mediates the biosynthesis of notoamide, a fungal indole alkaloid that belongs to a family of natural products containing a characteristic bicyclo[2.2.2]diazaoctane core. The first step of notoamide biosynthesis involves coupling of L-proline and L-tryptophan by the bimodular NRPS notE, to produce cyclo-L-tryptophan-L-proline called brevianamide F. The reverse prenyltransferase notF then acts as a deoxybrevianamide E synthase and converts brevianamide F to deoxybrevianamide E via reverse prenylation at C-2 of the indole ring leading to the bicyclo[2.2.2]diazaoctane core. Deoxybrevianamide E is further hydroxylated at C-6 of the indole ring, likely catalyzed by the cytochrome P450 monooxygenase notG, to yield 6-hydroxy-deoxybrevianamide E. 6-hydroxy-deoxybrevianamide E is a specific substrate of the prenyltransferase notC for normal prenylation at C-7 to produce 6-hydroxy-7-prenyl-deoxybrevianamide, also called notoamide S. As the proposed pivotal branching point in notoamide biosynthesis, notoamide S can be diverted to notoamide E through an oxidative pyran ring closure putatively catalyzed by either notH cytochrome P450 monooxygenase or the notD FAD-linked oxidoreductase. This step would be followed by an indole 2,3-epoxidation-initiated pinacol-like rearrangement catalyzed by the notB FAD-dependent monooxygenase leading to the formation of notoamide C and notoamide D. On the other hand notoamide S is converted to notoamide T by notH (or notD), a bifunctional oxidase that also functions as the intramolecular Diels-Alderase responsible for generation of (+)-notoamide T. To generate antipodal (-)-notoaminide T, notH' (or notD') in Aspergillus versicolor is expected to catalyze a Diels-Alder reaction leading to the opposite stereochemistry. The remaining oxidoreductase notD (or notH) likely catalyzes the oxidative pyran ring formation to yield (+)-stephacidin A. The FAD-dependent monooxygenase notI is highly similar to notB and is predicted to catalyze a similar conversion from (+)-stephacidin A to (-)-notoamide B via the 2,3-epoxidation of (+)-stephacidin A followed by a pinacol-type rearrangement. Finally, it remains unclear which enzyme could be responsible for the final hydroxylation steps leading to notoamide A and sclerotiamide. In Aspergillus sp. (strain MF297-2), this protein is FAD-linked oxidoreductase notD.